The sequence spans 400 residues: Tyrosine--tRNA ligase (400 aa).

A 'HIGH' region motif is present at residues 45-54; sequence PTAPDLHLGH. Positions 230–234 match the 'KMSKS' region motif; that stretch reads KMSKS. An ATP-binding site is contributed by lysine 233. Residues 339-399 form the S4 RNA-binding domain; it reads EWIARVLVIA…GKRRFAKVII (61 aa).

The protein belongs to the class-I aminoacyl-tRNA synthetase family. TyrS type 2 subfamily. Homodimer.

The protein localises to the cytoplasm. It catalyses the reaction tRNA(Tyr) + L-tyrosine + ATP = L-tyrosyl-tRNA(Tyr) + AMP + diphosphate + H(+). Functionally, catalyzes the attachment of tyrosine to tRNA(Tyr) in a two-step reaction: tyrosine is first activated by ATP to form Tyr-AMP and then transferred to the acceptor end of tRNA(Tyr). The chain is Tyrosine--tRNA ligase from Helicobacter hepaticus (strain ATCC 51449 / 3B1).